We begin with the raw amino-acid sequence, 119 residues long: uncharacterized protein (119 aa).

A disordered region spans residues 1–20; the sequence is MPHLAAEAHTWPPHISHSTL. Residues 74–94 form a helical membrane-spanning segment; it reads LLFVVHQGHIGTGLIVFIICW.

The protein resides in the membrane. This is an uncharacterized protein from Saccharomyces cerevisiae (strain ATCC 204508 / S288c) (Baker's yeast).